Consider the following 538-residue polypeptide: Protein phosphatase EYA2 (538 aa).

Over residues H209–S230 the composition is skewed to polar residues. The tract at residues H209–G263 is disordered. Basic and acidic residues predominate over residues K234 to L249. D274 acts as the Nucleophile in catalysis. The Mg(2+) site is built by D274, D276, and D502. The active-site Proton donor is the D276.

This sequence belongs to the HAD-like hydrolase superfamily. EYA family. Interacts with DACH2 and SIX1, and probably with SIX2, SIX4 and SIX5. Interacts with CAPN8. Interacts with GNAZ and GNAI2; this precludes interaction with SIX1. Mg(2+) serves as cofactor. As to expression, highest expression in muscle with lower levels in kidney, placenta, pancreas, brain and heart.

It localises to the cytoplasm. Its subcellular location is the nucleus. It carries out the reaction O-phospho-L-tyrosyl-[protein] + H2O = L-tyrosyl-[protein] + phosphate. In terms of biological role, functions both as protein phosphatase and as transcriptional coactivator for SIX1, and probably also for SIX2, SIX4 and SIX5. Tyrosine phosphatase that dephosphorylates 'Tyr-142' of histone H2AX (H2AXY142ph) and promotes efficient DNA repair via the recruitment of DNA repair complexes containing MDC1. 'Tyr-142' phosphorylation of histone H2AX plays a central role in DNA repair and acts as a mark that distinguishes between apoptotic and repair responses to genotoxic stress. Its function as histone phosphatase may contribute to its function in transcription regulation during organogenesis. Plays an important role in hypaxial muscle development together with SIX1 and DACH2; in this it is functionally redundant with EYA1. The sequence is that of Protein phosphatase EYA2 (EYA2) from Homo sapiens (Human).